A 304-amino-acid chain; its full sequence is Porphobilinogen deaminase (304 aa).

Cys241 bears the S-(dipyrrolylmethanemethyl)cysteine mark.

Belongs to the HMBS family. Monomer. Dipyrromethane serves as cofactor.

It catalyses the reaction 4 porphobilinogen + H2O = hydroxymethylbilane + 4 NH4(+). It participates in porphyrin-containing compound metabolism; protoporphyrin-IX biosynthesis; coproporphyrinogen-III from 5-aminolevulinate: step 2/4. Its function is as follows. Tetrapolymerization of the monopyrrole PBG into the hydroxymethylbilane pre-uroporphyrinogen in several discrete steps. In Vesicomyosocius okutanii subsp. Calyptogena okutanii (strain HA), this protein is Porphobilinogen deaminase.